The primary structure comprises 430 residues: POU domain, class 2, transcription factor 3 (430 aa).

Disordered stretches follow at residues 1–40, 60–81, 129–180, and 248–267; these read MVNLEPMHTEIKMSGDVADSTDARSTFGQVESGNDRNGLD, HRPCHLSQGPTMMPGNQMSGDM, LLLP…EPTD, and DAESSPSDPSASTPSSYPTL. Polar residues-rich tracts occupy residues 23–32 and 67–78; these read ARSTFGQVES and QGPTMMPGNQMS. Low complexity predominate over residues 129–139; sequence LLLPQTGPGLT. The region spanning 176–250 is the POU-specific domain; the sequence is DEPTDLEELE…LLEKWLNDAE (75 aa). Residues 251 to 267 show a composition bias toward low complexity; the sequence is SSPSDPSASTPSSYPTL. The segment at residues 274-333 is a DNA-binding region (homeobox); sequence KRKKRTSIETNIRLTLEKRFQDNPKPSSEEISMIAEQLSMEKEVVRVWFCNRRQKEKRIN. Composition is skewed to low complexity over residues 355 to 364 and 374 to 390; these read SLGSLSVPPV and SSCSPGNNSRPSSPGSG. The tract at residues 355-413 is disordered; sequence SLGSLSVPPVHSTMPGTVTSSCSPGNNSRPSSPGSGLHASSPTASQNNSKAAMNPSSAA. Positions 392–413 are enriched in polar residues; it reads HASSPTASQNNSKAAMNPSSAA.

This sequence belongs to the POU transcription factor family. Class-2 subfamily. Interacts (via the POU domain) with POU2AF1 and POU2AF2 in a DNA-dependent manner; this interaction recruits POU2AF2 to chromatin and increases POU2F3 transactivation activity. As to expression, expressed in epidermis and hair follicles.

It localises to the nucleus. Functionally, transcription factor that binds to the octamer motif (5'-ATTTGCAT-3') and regulates cell type-specific differentiation pathways. Involved in the regulation of keratinocytes differentiation. The POU2F3-POU2AF2/POU2AF3 complex drives the expression of tuft-cell-specific genes, a rare chemosensory cells that coordinate immune and neural functions within mucosal epithelial tissues. Inhibits transactivation by POU2F1. The polypeptide is POU domain, class 2, transcription factor 3 (Pou2f3) (Rattus norvegicus (Rat)).